The primary structure comprises 235 residues: uncharacterized protein (235 aa).

2 helical membrane-spanning segments follow: residues 167 to 187 (AFKL…LNEL) and 190 to 210 (LFAY…LLLW).

Its subcellular location is the membrane. This is an uncharacterized protein from Saccharomyces cerevisiae (strain ATCC 204508 / S288c) (Baker's yeast).